The chain runs to 193 residues: Small ribosomal subunit protein eS7 (193 aa).

It belongs to the eukaryotic ribosomal protein eS7 family.

This Dictyostelium discoideum (Social amoeba) protein is Small ribosomal subunit protein eS7 (rps7).